Here is a 428-residue protein sequence, read N- to C-terminus: Lupus La protein homolog A (428 aa).

Positions 7-99 (KEQKLDSDTK…RRSPAKPLPE (93 aa)) constitute an HTH La-type RNA-binding domain. In terms of domain architecture, RRM spans 111–203 (KSVYIKGFPT…EERKLNKSEE (93 aa)). Disordered regions lie at residues 187-223 (EYHA…DAER) and 323-428 (QESF…VGDQ). Short sequence motifs (nuclear localization signal) lie at residues 196–212 (RKLN…QVKK) and 316–332 (KKIL…RKGR). Residues 227–349 (EERVGSLLKF…KGRGGKGNDS (123 aa)) enclose the xRRM domain. 2 stretches are compositionally biased toward basic residues: residues 328–343 (KRKG…KGRG) and 352–361 (RKRTQFQGKK). Acidic residues predominate over residues 366–377 (SSDDEDDMEESE). Basic and acidic residues predominate over residues 406 to 428 (RSLDDKAEDGPAVKQSKTEVGDQ).

Post-translationally, phosphorylated.

Its subcellular location is the nucleus. La protein plays a role in the transcription of RNA polymerase III. It is most probably a transcription termination factor. Binds to the 3' termini of virtually all nascent polymerase III transcripts. This Xenopus laevis (African clawed frog) protein is Lupus La protein homolog A (ssb-a).